The chain runs to 335 residues: Fimbrial adhesin PapGI (335 aa).

Positions 1-21 (MKKWFPAFLFLSLSGGNDALA) are cleaved as a signal peptide.

The protein belongs to the adhesin PapG family. In terms of assembly, interacts with chaperone PapD. Assembly of the P pilus requires periplasmic chaperone PapD, in absence of the chaperone overexpression of this subunit is toxic, where the protein accumulates in the periplasm. PapD stimulates release of PapG from an inner membrane-associated form (where at least 1 disulfide bond can form) into the periplasm and also helps it achieve its correct digalactoside-binding conformation. Post-translationally, contains disulfide bonds.

The protein resides in the secreted. Its subcellular location is the fimbrium. Tip adhesin component of type P pili that binds preferentially to host cell glycosphingolipids such as globotriaosylceramide. The polypeptide is Fimbrial adhesin PapGI (Escherichia coli).